The primary structure comprises 353 residues: UDP-3-O-acylglucosamine N-acyltransferase (353 aa).

The active-site Proton acceptor is H242.

The protein belongs to the transferase hexapeptide repeat family. LpxD subfamily. In terms of assembly, homotrimer.

The enzyme catalyses a UDP-3-O-[(3R)-3-hydroxyacyl]-alpha-D-glucosamine + a (3R)-hydroxyacyl-[ACP] = a UDP-2-N,3-O-bis[(3R)-3-hydroxyacyl]-alpha-D-glucosamine + holo-[ACP] + H(+). It functions in the pathway bacterial outer membrane biogenesis; LPS lipid A biosynthesis. Functionally, catalyzes the N-acylation of UDP-3-O-acylglucosamine using 3-hydroxyacyl-ACP as the acyl donor. Is involved in the biosynthesis of lipid A, a phosphorylated glycolipid that anchors the lipopolysaccharide to the outer membrane of the cell. In Pseudomonas aeruginosa (strain LESB58), this protein is UDP-3-O-acylglucosamine N-acyltransferase.